The following is a 138-amino-acid chain: Acidic phospholipase A2 BITP01A (138 aa).

The first 16 residues, 1-16, serve as a signal peptide directing secretion; sequence MRTLWIMAVLLVGVEG. Cystine bridges form between C42/C131, C44/C60, C59/C111, C65/C138, C66/C104, C73/C97, and C91/C102. Residues Y43, G45, and G47 each contribute to the Ca(2+) site. H63 is an active-site residue. D64 contributes to the Ca(2+) binding site. D105 is an active-site residue.

Requires Ca(2+) as cofactor. As to expression, expressed by the venom gland.

The protein resides in the secreted. The enzyme catalyses a 1,2-diacyl-sn-glycero-3-phosphocholine + H2O = a 1-acyl-sn-glycero-3-phosphocholine + a fatty acid + H(+). In terms of biological role, snake venom phospholipase A2 (PLA2) that induces edema in mice, produces neuromuscular blockade in chick biventer cervicis, increases CK release and produces myonecrosis. PLA2 catalyzes the calcium-dependent hydrolysis of the 2-acyl groups in 3-sn-phosphoglycerides. The chain is Acidic phospholipase A2 BITP01A from Bothrops insularis (Golden lancehead).